The primary structure comprises 428 residues: Septin homolog spn7 (428 aa).

Residues 15–290 enclose the Septin-type G domain; the sequence is KGKKLRIMVA…ENYRTEKLSN (276 aa). Residues 25–32 form a G1 motif region; sequence GSSYTSYQ. Residues 25–32, G86, 166–174, and G224 contribute to the GTP site; these read GSSYTSYQ and NSNAFTEEE. The tract at residues 83-86 is G3 motif; it reads EVNG. Residues 165 to 168 form a G4 motif region; it reads GNSN. 2 disordered regions span residues 287 to 345 and 387 to 414; these read KLSN…SEEL and KEFPHRTTSSRNSLPNNTTKELEMKKMD. Polar residues predominate over residues 290–307; the sequence is NDSPSNTSLSLQKQNSIV. Positions 309 to 325 are enriched in basic and acidic residues; the sequence is NEDKRSVNGSERTETRS. Composition is skewed to polar residues over residues 326-339 and 392-405; these read SIDQSEMRTNVSDS and RTTSSRNSLPNNTT.

It belongs to the TRAFAC class TrmE-Era-EngA-EngB-Septin-like GTPase superfamily. Septin GTPase family. In terms of assembly, component of the sporulation-specific septin complex composed of at least spn2, spn5, spn6 and spn7.

The protein localises to the cytoplasm. The protein resides in the nucleus. Its subcellular location is the forespore membrane. Septin-like protein involved in the correct orientation of forespore membrane extension during sporulation. Binds phosphatidylinositol 4-phosphate. The sequence is that of Septin homolog spn7 (spn7) from Schizosaccharomyces pombe (strain 972 / ATCC 24843) (Fission yeast).